Reading from the N-terminus, the 174-residue chain is UPF0316 protein Dhaf_3052 (174 aa).

3 helical membrane-spanning segments follow: residues 4 to 24, 35 to 55, and 59 to 79; these read ILQF…LTTI, VYAS…LSII, and LDSY…VYLG.

The protein belongs to the UPF0316 family.

It localises to the cell membrane. This is UPF0316 protein Dhaf_3052 from Desulfitobacterium hafniense (strain DSM 10664 / DCB-2).